Reading from the N-terminus, the 235-residue chain is Regulator of G-protein signaling 18 (235 aa).

Ser49 carries the post-translational modification Phosphoserine. Positions 86–202 constitute an RGS domain; sequence SFDKLLSHRD…LKSEIYLHLI (117 aa). A phosphoserine mark is found at Ser216 and Ser218.

Its subcellular location is the cytoplasm. Functionally, inhibits signal transduction by increasing the GTPase activity of G protein alpha subunits thereby driving them into their inactive GDP-bound form. Binds to G(i) alpha-1, G(i) alpha-2, G(i) alpha-3 and G(q) alpha. This is Regulator of G-protein signaling 18 (Rgs18) from Rattus norvegicus (Rat).